Here is a 205-residue protein sequence, read N- to C-terminus: Small ribosomal subunit protein uS4 (205 aa).

The disordered stretch occupies residues 1–44 (MSKRHSQKYKIDRRMGENLWGRPKSPVNSRSYGPGQHGQRRKTK). Positions 94-173 (SRLDAIVYRC…LPEYIDLDAK (80 aa)) constitute an S4 RNA-binding domain.

The protein belongs to the universal ribosomal protein uS4 family. As to quaternary structure, part of the 30S ribosomal subunit. Contacts protein S5. The interaction surface between S4 and S5 is involved in control of translational fidelity.

In terms of biological role, one of the primary rRNA binding proteins, it binds directly to 16S rRNA where it nucleates assembly of the body of the 30S subunit. Its function is as follows. With S5 and S12 plays an important role in translational accuracy. The chain is Small ribosomal subunit protein uS4 from Maricaulis maris (strain MCS10) (Caulobacter maris).